We begin with the raw amino-acid sequence, 570 residues long: Urease subunit alpha (570 aa).

The region spanning 131–570 (GGFDSHIHFI…LPMAQRYFMY (440 aa)) is the Urease domain. Residues histidine 136, histidine 138, and lysine 219 each coordinate Ni(2+). An N6-carboxylysine modification is found at lysine 219. A substrate-binding site is contributed by histidine 221. Residues histidine 248 and histidine 274 each coordinate Ni(2+). Histidine 322 functions as the Proton donor in the catalytic mechanism. Residue aspartate 362 coordinates Ni(2+).

It belongs to the metallo-dependent hydrolases superfamily. Urease alpha subunit family. In terms of assembly, heterotrimer of UreA (gamma), UreB (beta) and UreC (alpha) subunits. Three heterotrimers associate to form the active enzyme. The cofactor is Ni cation. Post-translationally, carboxylation allows a single lysine to coordinate two nickel ions.

The protein localises to the cytoplasm. The enzyme catalyses urea + 2 H2O + H(+) = hydrogencarbonate + 2 NH4(+). It participates in nitrogen metabolism; urea degradation; CO(2) and NH(3) from urea (urease route): step 1/1. In Rhodopseudomonas palustris (strain HaA2), this protein is Urease subunit alpha.